The following is a 93-amino-acid chain: Putative pterin-4-alpha-carbinolamine dehydratase (93 aa).

It belongs to the pterin-4-alpha-carbinolamine dehydratase family.

It carries out the reaction (4aS,6R)-4a-hydroxy-L-erythro-5,6,7,8-tetrahydrobiopterin = (6R)-L-erythro-6,7-dihydrobiopterin + H2O. This Sulfurisphaera tokodaii (strain DSM 16993 / JCM 10545 / NBRC 100140 / 7) (Sulfolobus tokodaii) protein is Putative pterin-4-alpha-carbinolamine dehydratase.